The sequence spans 81 residues: U-megalopygitoxin(3)-Mo4 (81 aa).

Positions 1–20 (MNSKFVLIVVFLAVVSICFA) are cleaved as a signal peptide.

The protein belongs to the caterpillar 3 family. Contains 3 disulfide bonds. In terms of tissue distribution, expressed by the venom apparatus.

The protein localises to the secreted. Functionally, probable toxin. This is U-megalopygitoxin(3)-Mo4 from Megalopyge opercularis (Southern flannel moth).